Consider the following 178-residue polypeptide: UPF0302 protein BcerKBAB4_1445 (178 aa).

This sequence belongs to the UPF0302 family.

The polypeptide is UPF0302 protein BcerKBAB4_1445 (Bacillus mycoides (strain KBAB4) (Bacillus weihenstephanensis)).